The chain runs to 1373 residues: Inactive tyrosine-protein kinase PRAG1 (1373 aa).

2 disordered regions span residues 31-50 (AGHPKARANSLPAGTRLPAR) and 197-235 (TSSCPKGPRPCTSPQPLRESLPSEDDSDQRCSPSGDSEG). Tyr238 bears the Phosphotyrosine mark. Basic and acidic residues-rich tracts occupy residues 250 to 263 (DAVHSTEGSGRRGG) and 272 to 284 (QGPRTRPTEEEKQ). The disordered stretch occupies residues 250–338 (DAVHSTEGSG…SGASSPFAPH (89 aa)). The segment covering 317–333 (SSSDGLSCGSSRSGASS) has biased composition (low complexity). 2 positions are modified to phosphotyrosine: Tyr343 and Tyr391. Disordered stretches follow at residues 376–448 (QPAS…NPAP) and 468–794 (IYLS…LPQK). Residues 419 to 438 (SQGQVWTGDTWIQKTPPSWS) are compositionally biased toward polar residues. A compositionally biased stretch (basic and acidic residues) spans 506 to 522 (RESHPHNVTENTAKEKP). Over residues 526 to 538 (PKLSKSSPGGSPV) the composition is skewed to low complexity. 2 stretches are compositionally biased toward polar residues: residues 568 to 578 (NLTSSCHTNGV) and 655 to 670 (TSGQNSKTNSGMSKSA). 2 positions are modified to phosphoserine: Ser671 and Ser720. Polar residues-rich tracts occupy residues 711 to 721 (VSQSSAESLSP) and 729 to 740 (SFTTGSTDSLAS). Residues Ser757 and Ser802 each carry the phosphoserine modification. The segment at 804–823 (PDGFFWTQGSPKPRTASPKL) is disordered. The segment at 911–954 (STQLQLHSLLSSISSKEGTYAKLGGLYTQSLARLVTKCEDLFMG) is required for homodimerization. Residues 945-1296 (VTKCEDLFMG…EAKRVLQCLL (352 aa)) enclose the Protein kinase domain. A compositionally biased stretch (polar residues) spans 1041–1050 (LASPDTSSKD). Disordered stretches follow at residues 1041 to 1062 (LASPDTSSKDTAPAVSPQPPAQ) and 1138 to 1171 (QSSPGPSATPTVPTTTSRCPSAAPAATTACQGGP). The segment covering 1139–1167 (SSPGPSATPTVPTTTSRCPSAAPAATTAC) has biased composition (low complexity). The tract at residues 1298–1373 (GPRRELVEQP…LQSLKLLQLL (76 aa)) is required for homodimerization.

The protein belongs to the protein kinase superfamily. As to quaternary structure, homodimer. Dimerization leads to the catalytic activation of CSK. Interacts (via C-terminus) with RND2. Interacts with CSK (via SH2 domain) in a Tyr-391 phosphorylation-dependent manner; this interaction potentiates kinase activity of CSK. Interacts with NOTCH1 intracellular domain (N1ICD). Forms a complex with PRAG1, N1ICD and MAML1, in a MAML1-dependent manner. In terms of processing, phosphorylated by CSK on Tyr-238, Tyr-343, and Tyr-391; Tyr-391 is a primary site of phosphorylation.

It localises to the cytoplasm. It is found in the nucleus. The protein resides in the cell junction. The protein localises to the focal adhesion. Functionally, catalytically inactive protein kinase that acts as a scaffold protein. Functions as an effector of the small GTPase RND2, which stimulates RhoA activity and inhibits NGF-induced neurite outgrowth. Promotes Src family kinase (SFK) signaling by regulating the subcellular localization of CSK, a negative regulator of these kinases, leading to the regulation of cell morphology and motility by a CSK-dependent mechanism. Acts as a critical coactivator of Notch signaling. This chain is Inactive tyrosine-protein kinase PRAG1, found in Mus musculus (Mouse).